The chain runs to 584 residues: Ubiquitin-like-specific protease 1D (584 aa).

2 disordered regions span residues aspartate 28–leucine 64 and aspartate 99–glutamate 323. Residues aspartate 99–serine 120 are compositionally biased toward basic and acidic residues. Residues lysine 121–valine 132 show a composition bias toward low complexity. Basic and acidic residues-rich tracts occupy residues aspartate 142–serine 165 and proline 176–glutamate 196. A compositionally biased stretch (basic residues) spans arginine 197–valine 207. Positions glycine 221–methionine 253 are enriched in basic and acidic residues. Residues isoleucine 261–aspartate 274 are compositionally biased toward acidic residues. Over residues threonine 275–tryptophan 286 the composition is skewed to basic and acidic residues. Active-site residues include histidine 438, aspartate 461, and cysteine 525.

This sequence belongs to the peptidase C48 family.

It is found in the nucleus speckle. Protease that catalyzes two essential functions in the SUMO pathway: processing of full-length SUMOs to their mature forms and deconjugation of SUMO from targeted proteins. Cleaves precursors of SUM1 and SUM2, but not of SUM3 or SUM5. Able to release SUM1 and SUM2 from conjugates, but unable to cleave SUM3. Protease activity mainly directed at deconjugating SUM1 and SUM2 from their target proteins. Regulates salt stress responses and flowering time. Redundant with ULP1C. The protein is Ubiquitin-like-specific protease 1D (ULP1D) of Arabidopsis thaliana (Mouse-ear cress).